The chain runs to 417 residues: Type IV inositol polyphosphate 5-phosphatase 9 (417 aa).

Catalytic regions lie at residues 258–273 (DRVIFLGDLNYRISLP) and 339–354 (KKRAPAWCDRIIWYGN).

It belongs to the inositol polyphosphate 5-phosphatase family. Specifically expressed in roots.

It catalyses the reaction a 1,2-diacyl-sn-glycero-3-phospho-(1D-myo-inositol-4,5-bisphosphate) + H2O = a 1,2-diacyl-sn-glycero-3-phospho-(1D-myo-inositol 4-phosphate) + phosphate. The catalysed reaction is a 1,2-diacyl-sn-glycero-3-phospho-(1D-myo-inositol-3,4,5-trisphosphate) + H2O = a 1,2-diacyl-sn-glycero-3-phospho-(1D-myo-inositol-3,4-bisphosphate) + phosphate. Functionally, has phosphatase activity toward PtdIns(4,5)P2 and at a lower extent toward PtdIns(3,4,5)P3 but not toward Ins(1,4,5)P3. Functions in salt stress response by regulating reactive oxygen species (ROS) production, endocytosis, Ca(2+) influx and stress-responsive genes expression. This is Type IV inositol polyphosphate 5-phosphatase 9 from Arabidopsis thaliana (Mouse-ear cress).